The primary structure comprises 169 residues: Peptide deformylase (169 aa).

The Fe cation site is built by C91 and H133. E134 is an active-site residue. Fe cation is bound at residue H137.

The protein belongs to the polypeptide deformylase family. Fe(2+) is required as a cofactor.

It catalyses the reaction N-terminal N-formyl-L-methionyl-[peptide] + H2O = N-terminal L-methionyl-[peptide] + formate. Removes the formyl group from the N-terminal Met of newly synthesized proteins. Requires at least a dipeptide for an efficient rate of reaction. N-terminal L-methionine is a prerequisite for activity but the enzyme has broad specificity at other positions. In Pectobacterium atrosepticum (strain SCRI 1043 / ATCC BAA-672) (Erwinia carotovora subsp. atroseptica), this protein is Peptide deformylase.